The primary structure comprises 429 residues: Keratin, type I cytoskeletal 47 kDa (429 aa).

Residues 1–16 (MTSYRSSSASYYSGSS) are compositionally biased toward low complexity. Positions 1–20 (MTSYRSSSASYYSGSSSKGG) are disordered. The head stretch occupies residues 1-69 (MTSYRSSSAS…EAASSSFGGN (69 aa)). Residues 70-105 (EKHAMQNLNDRLASYLEKVRALEATNSDLEGKIRNW) are coil 1A. The IF rod domain maps to 70-385 (EKHAMQNLND…RLLEGELGQV (316 aa)). The segment at 106 to 127 (YDKQSDAGIGAGSKDYSKYFEI) is linker 1. Positions 128 to 219 (IAELRNKIRA…KNHEEEMSHA (92 aa)) are coil 1B. The linker 12 stretch occupies residues 220–242 (KSQSAGKVSVEMDAALGVDLTSI). A coil 2 region spans residues 243-381 (LNNMRADYEI…QTYRRLLEGE (139 aa)). The tract at residues 382-429 (LGQVTTVANTSSVESKTESSSTSTTRTRMVKTIVEEVVDGKVVSSRVE) is tail. The segment at 389–408 (ANTSSVESKTESSSTSTTRT) is disordered. Positions 391 to 408 (TSSVESKTESSSTSTTRT) are enriched in low complexity.

The protein belongs to the intermediate filament family. In terms of assembly, heterotetramer of two type I and two type II keratins.

In Xenopus laevis (African clawed frog), this protein is Keratin, type I cytoskeletal 47 kDa (xk81a1).